The primary structure comprises 633 residues: Chaperone protein dnaK2 (633 aa).

A Phosphothreonine; by autocatalysis modification is found at Thr-196. The disordered stretch occupies residues 600-633; that stretch reads ATADGGPAQHAATGGPTSGGGGGDDVIDAEFDKG. Residues 624-633 are compositionally biased toward acidic residues; sequence DVIDAEFDKG.

The protein belongs to the heat shock protein 70 family.

Acts as a chaperone. In Streptomyces avermitilis (strain ATCC 31267 / DSM 46492 / JCM 5070 / NBRC 14893 / NCIMB 12804 / NRRL 8165 / MA-4680), this protein is Chaperone protein dnaK2 (dnaK2).